The primary structure comprises 188 residues: MEEKNHIDHYANALYSIWLELDKKNKIIFTSSAKDIYFSLKNNYEMVHIIDSNIISKEEKTKILNKIFFDLSKSISNIYLKNFLFVLNDNNFFKRILEIFISFFQKLDEHQNFLFIRIYSPFVVEKKLLEKIEHLFSIKTGKRVRYENIIDKSLIGGMKIMFGNDVYDYSIKGKIDQIKWNIENNKEV.

This sequence belongs to the ATPase delta chain family. As to quaternary structure, F-type ATPases have 2 components, F(1) - the catalytic core - and F(0) - the membrane proton channel. F(1) has five subunits: alpha(3), beta(3), gamma(1), delta(1), epsilon(1). F(0) has three main subunits: a(1), b(2) and c(10-14). The alpha and beta chains form an alternating ring which encloses part of the gamma chain. F(1) is attached to F(0) by a central stalk formed by the gamma and epsilon chains, while a peripheral stalk is formed by the delta and b chains.

The protein resides in the cell membrane. Functionally, f(1)F(0) ATP synthase produces ATP from ADP in the presence of a proton or sodium gradient. F-type ATPases consist of two structural domains, F(1) containing the extramembraneous catalytic core and F(0) containing the membrane proton channel, linked together by a central stalk and a peripheral stalk. During catalysis, ATP synthesis in the catalytic domain of F(1) is coupled via a rotary mechanism of the central stalk subunits to proton translocation. Its function is as follows. This protein is part of the stalk that links CF(0) to CF(1). It either transmits conformational changes from CF(0) to CF(1) or is implicated in proton conduction. The protein is ATP synthase subunit delta of Malacoplasma penetrans (strain HF-2) (Mycoplasma penetrans).